We begin with the raw amino-acid sequence, 261 residues long: Thioesterase TesA (261 aa).

The interval Met1 to Ala24 is disordered. Catalysis depends on residues Ser104, Asp208, and His236.

Belongs to the thioesterase family.

It catalyses the reaction a fatty acyl-CoA + H2O = a fatty acid + CoA + H(+). Involved in the synthesis of both phthiocerol dimycocerosates (PDIMs) and phenolic glycolipids (PGLs), which are structurally related lipids non-covalently bound to the outer cell wall layer of M.tuberculosis and are important virulence factors. The sequence is that of Thioesterase TesA (tesA) from Mycobacterium bovis (strain ATCC BAA-935 / AF2122/97).